The sequence spans 1013 residues: EF-hand calcium-binding domain-containing protein 6 (1013 aa).

5 EF-hand domains span residues 20 to 55 (KNIKTVMKAFKLIDVNKTGLVRPQELRRVLETFCLK), 145 to 180 (KSYEKIEKALSAGDPCKGGYVSFNYLKIVLDTFIYQ), 251 to 286 (DRSASLKKALLIINTKPDGPITREEFRYILNCVAIK), 287 to 322 (LSDSEFKELMQILDPGDTGVVNTSMFIDLIEENCRM), and 352 to 387 (RNLQAFYNMLRSYDLGDTGLIGRNNFKKIMHVFCPF). Residues 441 to 460 (QKDEQQQPDLSERTKPTEDK) form a disordered region. EF-hand domains lie at 482 to 517 (QQDPAFKKRFLDFSKEPNGKINVHDFRKILEDTGMP), 589 to 624 (ESFRDPYSAFFKTDVDRDGIINMHDLHRLLLHLLLN), 695 to 730 (NRWSDLSKNFLETDNEGNGILRRRDIKNALYGFDIP), 731 to 766 (LTPREFEKLWARYNTEGKGHITYQEFLQKLGINYSP), 812 to 847 (DLHQDISKAFTKIDKSKTNYISICKMQKVLEECGCS), and 917 to 952 (SSQLALSTAFSALDKEDTGFVKATEFGQVLKDFCYK). 4 residues coordinate Ca(2+): aspartate 602, aspartate 604, aspartate 606, and aspartate 613. The residue at position 732 (threonine 732) is a Phosphothreonine.

In terms of assembly, microtubule inner protein component of sperm flagellar doublet microtubules. Binds PARK7. Part of a ternary complex containing PARK7, EFCAB6/DJBP and AR.

The protein localises to the nucleus. It is found in the cytoplasm. The protein resides in the cytoskeleton. Its subcellular location is the flagellum axoneme. Its function is as follows. Negatively regulates the androgen receptor by recruiting histone deacetylase complex, and protein DJ-1 antagonizes this inhibition by abrogation of this complex. Microtubule inner protein (MIP) part of the dynein-decorated doublet microtubules (DMTs) in cilia axoneme, which is required for motile cilia beating. This is EF-hand calcium-binding domain-containing protein 6 (EFCAB6) from Pongo abelii (Sumatran orangutan).